The chain runs to 465 residues: Gamma-aminobutyric acid receptor subunit rho-2 (465 aa).

The N-terminal stretch at 1–20 (MPYFTRLILFLFCLMVLVES) is a signal peptide. The Extracellular segment spans residues 21-260 (RKPKRKRWTG…LYINFTLRRH (240 aa)). Position 105 (arginine 105) interacts with 4-aminobutanoate. Asparagine 120 is a glycosylation site (N-linked (GlcNAc...) asparagine). Serine 169 lines the 4-aminobutanoate pocket. A disulfide bridge links cysteine 178 with cysteine 192. Glutamate 197 serves as a coordination point for 4-aminobutanoate. Asparagine 254 is a glycosylation site (N-linked (GlcNAc...) asparagine). A helical transmembrane segment spans residues 261–281 (IFFFLLQTYFPATLMVMLSWV). The Cytoplasmic portion of the chain corresponds to 282 to 293 (SFWIDRRAVPAR). Residues 294-314 (VSLGITTVLTMTTIITGVNAS) form a helical membrane-spanning segment. Over 315-325 (MPRVSYVKAVD) the chain is Extracellular. A helical transmembrane segment spans residues 326–346 (IYLWVSFVFVFLSVLEYAAVN). Topologically, residues 347–443 (YLTTVQERKE…IFQNTHAIDK (97 aa)) are cytoplasmic. The chain crosses the membrane as a helical span at residues 444-464 (YSRLIFPASYIFFNLIYWSVF). Residue serine 465 is a topological domain, extracellular.

Belongs to the ligand-gated ion channel (TC 1.A.9) family. Gamma-aminobutyric acid receptor (TC 1.A.9.5) subfamily. GABRR2 sub-subfamily. Three rho subunits (rho-1/GBRR1, rho-2/GBRR2 and rho-3/GBRR3) coassemble either to form functional homopentamers or heteropentamers. Rho-2 is unable to form a functional homopentamer. Interacts with SQSTM1.

It is found in the postsynaptic cell membrane. It localises to the cell membrane. The catalysed reaction is chloride(in) = chloride(out). Functionally, rho subunit of the pentameric ligand-gated chloride channels responsible for mediating the effects of gamma-aminobutyric acid (GABA), the major inhibitory neurotransmitter in the brain. Rho-containing GABA-gated chloride channels are a subclass of GABA(A) receptors (GABAARs) entirely composed of rho subunits, where GABA molecules bind at the rho intersubunit interfaces. When activated by GABA, rho-GABAARs selectively allow the flow of chloride anions across the cell membrane down their electrochemical gradient. Rho-2 GABAARs may contribute to the regulation of glial development in the cerebellum by controlling extrasynaptic transmission. Rho-2 GABAARs are also involved in neuronal tonic (extrasynaptic) and phasic (synaptic) transmission in the Purkinje neurons of the cerebellum. Rho-2 GABAARs expressed in retina may play a role in retinal neurotransmission. The protein is Gamma-aminobutyric acid receptor subunit rho-2 of Homo sapiens (Human).